The chain runs to 218 residues: Octanoyltransferase (218 aa).

Residues 27-210 form the BPL/LPL catalytic domain; the sequence is AGAEETLYLL…QFRAIFADST (184 aa). Residues 72–79, 139–141, and 152–154 contribute to the substrate site; these read RGGNITCH, SIG, and GFA. The active-site Acyl-thioester intermediate is the Cys-170.

It belongs to the LipB family.

The protein localises to the cytoplasm. It catalyses the reaction octanoyl-[ACP] + L-lysyl-[protein] = N(6)-octanoyl-L-lysyl-[protein] + holo-[ACP] + H(+). It participates in protein modification; protein lipoylation via endogenous pathway; protein N(6)-(lipoyl)lysine from octanoyl-[acyl-carrier-protein]: step 1/2. Catalyzes the transfer of endogenously produced octanoic acid from octanoyl-acyl-carrier-protein onto the lipoyl domains of lipoate-dependent enzymes. Lipoyl-ACP can also act as a substrate although octanoyl-ACP is likely to be the physiological substrate. The polypeptide is Octanoyltransferase (Nitratidesulfovibrio vulgaris (strain DSM 19637 / Miyazaki F) (Desulfovibrio vulgaris)).